The following is a 258-amino-acid chain: MATSRLEINFVRLLSRCESLASEKRAETEWRLEKYVGALEEMFVALKKSPSKPTPETLTDYNRKVDFLKGLLEAEKLPSPAEKSLANQFLAPGRTPTISSERTPASKTVHIQSKARCAGEMRKELMSSGVSNSALLENDLRHRKSLPVDERQSAAELDQILQHHHNLQEKLADDMLNLARNLKNNTLAAQNIIKQDNQTLTQSMRQADVNFEKLKTESERLEQHAKKSVNWFLWLMLIVVSFTFISMILFIRLFPRLR.

At 1-230 (MATSRLEINF…LEQHAKKSVN (230 aa)) the chain is on the cytoplasmic side. Residues 151–230 (RQSAAELDQI…LEQHAKKSVN (80 aa)) adopt a coiled-coil conformation. A helical; Anchor for type IV membrane protein transmembrane segment spans residues 231–251 (WFLWLMLIVVSFTFISMILFI). Over 252–258 (RLFPRLR) the chain is Extracellular.

This sequence belongs to the USE1 family.

Its subcellular location is the endoplasmic reticulum membrane. In terms of biological role, SNARE that may be involved in targeting and fusion of Golgi-derived retrograde transport vesicles with the ER. The sequence is that of Vesicle transport protein USE1 (use1) from Danio rerio (Zebrafish).